The primary structure comprises 434 residues: Sodium/bile acid cotransporter 5 (434 aa).

Positions 1 to 18 (MSGNFFIFLLLLVTPGEA) are cleaved as a signal peptide. Residues 19–129 (KKSFLSFLNI…VRVFRQTDDS (111 aa)) lie on the Extracellular side of the membrane. 2 N-linked (GlcNAc...) asparagine glycosylation sites follow: N73 and N96. A helical membrane pass occupies residues 130–150 (LLQAPIHVDSSIFLLVLSMIL). Topologically, residues 151–172 (LNKCAFGCKIEFQVLQTVWKRP) are cytoplasmic. The chain crosses the membrane as a helical span at residues 173-193 (LPILLGVVIQFFLMPFCGFLL). Residues 194 to 203 (SQILGLPKAQ) lie on the Extracellular side of the membrane. Residues 204–226 (AFGFVMTCTCPGGGGGYLFALLL) form a helical membrane-spanning segment. Residues 227 to 232 (EGDVTL) lie on the Cytoplasmic side of the membrane. The chain crosses the membrane as a helical span at residues 233–255 (AILMTCTSTSLALIMMPVNSYFY). The Extracellular segment spans residues 256-268 (SRLLGLAGAFHVP). A helical transmembrane segment spans residues 269-289 (VLKIVSTLLFILMPMSTGVII). Residues 290-306 (KHKMPAKAICLERVVRP) lie on the Cytoplasmic side of the membrane. The chain crosses the membrane as a helical span at residues 307–327 (LSLTLMFVGIYLAFRMGLVFL). Residues 328 to 331 (RMAN) are Extracellular-facing. The helical transmembrane segment at 332 to 352 (LEVFLLGLLVPALGLLFGYSL) threads the bilayer. Residues 353-365 (AKVYLLPLPVCKT) lie on the Cytoplasmic side of the membrane. The chain crosses the membrane as a helical span at residues 366-386 (VALETGMLNSFLALAIIQLSF). Residues 387-395 (SQPKAHEAS) lie on the Extracellular side of the membrane. Residues 396–416 (VAPFTVAMCSSCEMLLLLLVY) form a helical membrane-spanning segment. Residues 417–434 (KAKRRPSLSTEYEKTPLV) are Cytoplasmic-facing.

It belongs to the bile acid:sodium symporter (BASS) (TC 2.A.28) family.

The protein localises to the membrane. The polypeptide is Sodium/bile acid cotransporter 5 (Slc10a5) (Mus musculus (Mouse)).